A 240-amino-acid polypeptide reads, in one-letter code: Protein FAM246C (240 aa).

Disordered stretches follow at residues 1 to 117 (MAEP…WRSA) and 161 to 240 (LPAA…TRAA). Basic and acidic residues-rich tracts occupy residues 19–31 (EVLRRGTGRRRDP) and 60–74 (AASRSEVPRLLKLVE). Residues 165 to 175 (SPAPSPAPRPA) show a composition bias toward pro residues. Positions 176-187 (ARPCRGRSAPLA) are enriched in low complexity.

This sequence belongs to the FAM246 family.

This Homo sapiens (Human) protein is Protein FAM246C.